Consider the following 835-residue polypeptide: MPLSYQHFRKLLLLDEGDPLEDALPRLADEDLNRRVAEGLNLQHLPVSIPWTHKVGPFSGLYSVSTLTFNPQWKTPQFPLIHLKEDLIPFIESYFGPLTSNEKRRLKLVLPARFYPKATKYFPLEKGIKPHYPNDVVNHYYQVQHYLHTLWEAGVLYKRETTHSASFFGTPYTWEHKLQHGTQPVNVQPAGILSQSSAGPPVQGQCRLSRLGQKSKQGPLATSPRHGSGGLWSRTSATPWRPSGVEFTSSGFVCHSARHPSSSINQSRQRKETNTSYSSSERHSPTSHDLEHVLLPELSSESKGQRPLLSCWWLNFKHCQPCSDHCLHHIVKLLDDWGPCQHHGHHFIRIPRTPSRITGGVFLVDKNPHNATESRLVVDFSQFSRGNTSVSWPKFAVPNLQSLTNLLSTDLSWVSLDVFAAFYHLPLHPASMPHLLVGSSGLPRYVARVSSSTNSYRNNNNNGTLQDLHANCSRHLFVSLMLLYQTYGRKLHLYSHPLIMGFRKVPMGLGLSPFLLAQFTSAICSVVRRAFPHCMAFSYMDDVVLGAKSVQHLESLLASVTTFLLALGIHLNPEKTKRWGKALNFMGYVIGGYGSLPQQHIRDKIALCFQKLPCNRPIDWKVCQRIVGLLGFVAPFTQCGYAALMPIYTCIQKHQAFTFSLVYKTFLKDQYMHLYPVARQRAGHCQVFADATPTGWGLVMGNQRMRGTFLSPLPIHTAELLAACFARCWSGAKLIGTDNAVVLSRKYTHFPWLLGCAATWILRGTCFVYVPSKLNPADDPSRGCLGLLKPLPRLLFQPSTGRTSLYAVSPPVPFHRPGRVLFASPLQPGDAWRPP.

A terminal protein domain (TP) region spans residues M1–H176. The interval K177 to L334 is spacer. Disordered regions lie at residues L211–T235 and R258–H288. Positions D335–Q680 are polymerase/reverse transcriptase domain (RT). Residues H345–I590 enclose the Reverse transcriptase domain. Residues D417, D541, and D542 each coordinate Mg(2+).

This sequence belongs to the hepadnaviridae P protein family.

It carries out the reaction DNA(n) + a 2'-deoxyribonucleoside 5'-triphosphate = DNA(n+1) + diphosphate. The catalysed reaction is Endonucleolytic cleavage to 5'-phosphomonoester.. Its activity is regulated as follows. Activated by host HSP70 and HSP40 in vitro to be able to bind the epsilon loop of the pgRNA. Because deletion of the RNase H region renders the protein partly chaperone-independent, the chaperones may be needed indirectly to relieve occlusion of the RNA-binding site by this domain. Inhibited by several reverse-transcriptase inhibitors: Lamivudine, Adefovir and Entecavir. Multifunctional enzyme that converts the viral RNA genome into dsDNA in viral cytoplasmic capsids. This enzyme displays a DNA polymerase activity that can copy either DNA or RNA templates, and a ribonuclease H (RNase H) activity that cleaves the RNA strand of RNA-DNA heteroduplexes in a partially processive 3'- to 5'-endonucleasic mode. Neo-synthesized pregenomic RNA (pgRNA) are encapsidated together with the P protein, and reverse-transcribed inside the nucleocapsid. Initiation of reverse-transcription occurs first by binding the epsilon loop on the pgRNA genome, and is initiated by protein priming, thereby the 5'-end of (-)DNA is covalently linked to P protein. Partial (+)DNA is synthesized from the (-)DNA template and generates the relaxed circular DNA (RC-DNA) genome. After budding and infection, the RC-DNA migrates in the nucleus, and is converted into a plasmid-like covalently closed circular DNA (cccDNA). The activity of P protein does not seem to be necessary for cccDNA generation, and is presumably released from (+)DNA by host nuclear DNA repair machinery. The chain is Protein P from Woolly monkey hepatitis B virus (isolate Louisville) (WMHBV).